A 144-amino-acid chain; its full sequence is Methylglyoxal synthase (144 aa).

Positions 1 to 144 (MNIALIAHDE…EEEQRKFLTD (144 aa)) constitute an MGS-like domain. Substrate-binding positions include H8, K12, 34–37 (TGTT), and 54–55 (SG). D60 acts as the Proton donor/acceptor in catalysis. Position 87 (H87) interacts with substrate.

Belongs to the methylglyoxal synthase family.

It carries out the reaction dihydroxyacetone phosphate = methylglyoxal + phosphate. In terms of biological role, catalyzes the formation of methylglyoxal from dihydroxyacetone phosphate. The protein is Methylglyoxal synthase of Exiguobacterium sibiricum (strain DSM 17290 / CCUG 55495 / CIP 109462 / JCM 13490 / 255-15).